Here is a 49-residue protein sequence, read N- to C-terminus: uncharacterized protein (49 aa).

This is an uncharacterized protein from Sulfolobus spindle-shape virus 1 (SSV1).